Reading from the N-terminus, the 131-residue chain is Fluoride-specific ion channel FluC 2 (131 aa).

4 consecutive transmembrane segments (helical) span residues 5–25, 35–55, 59–79, and 95–115; these read SAVFIGGALGACLRYGLNLWI, WLENAAGSLLLGILTGFFMIG, PLLSAFLGTGFCGGFTTMSTF, and LLYVAASLISGIIFALIGVFV. Na(+) is bound by residues Gly-71 and Thr-74.

Belongs to the fluoride channel Fluc/FEX (TC 1.A.43) family.

The protein localises to the cell membrane. It catalyses the reaction fluoride(in) = fluoride(out). Na(+) is not transported, but it plays an essential structural role and its presence is essential for fluoride channel function. Fluoride-specific ion channel. Important for reducing fluoride concentration in the cell, thus reducing its toxicity. The chain is Fluoride-specific ion channel FluC 2 from Bacillus subtilis (strain 168).